Reading from the N-terminus, the 156-residue chain is MKLSSGWEQSVYVLLILARLPENRTMSSIALANRLKVSPSYLKKIIKSLVDEGLLRSTPGKNGGFSLNKELHDISFYDVFLAIEGRGRIFQSQGLLQNFIGSESGKAKRCAITSALDEIENTLVRTLSNVSLAQVADETQYNYNLGYLDEWIDEMD.

The 136-residue stretch at 2–137 (KLSSGWEQSV…SNVSLAQVAD (136 aa)) folds into the HTH rrf2-type domain.

This chain is Putative HTH-type transcriptional regulator YffB (yffB), found in Lactococcus lactis subsp. lactis (strain IL1403) (Streptococcus lactis).